Reading from the N-terminus, the 100-residue chain is Urease subunit gamma 2 (100 aa).

The protein belongs to the urease gamma subunit family. As to quaternary structure, heterotrimer of UreA (gamma), UreB (beta) and UreC (alpha) subunits. Three heterotrimers associate to form the active enzyme.

It localises to the cytoplasm. The catalysed reaction is urea + 2 H2O + H(+) = hydrogencarbonate + 2 NH4(+). It participates in nitrogen metabolism; urea degradation; CO(2) and NH(3) from urea (urease route): step 1/1. This Psychrobacter cryohalolentis (strain ATCC BAA-1226 / DSM 17306 / VKM B-2378 / K5) protein is Urease subunit gamma 2.